Here is an 849-residue protein sequence, read N- to C-terminus: Putative endoplasmic reticulum mannosidase MNL2 (849 aa).

Over 1–12 the chain is Cytoplasmic; that stretch reads MSIARLVYSLFR. A helical; Signal-anchor for type II membrane protein transmembrane segment spans residues 13 to 32; the sequence is RVRSVLLLFITISLLFYYTF. Residues 33-849 are Lumenal-facing; it reads QNEIDILNSY…TQGGHIIKKK (817 aa). An N-linked (GlcNAc...) asparagine glycan is attached at Asn45. The disordered stretch occupies residues 56 to 79; the sequence is HNTEGSSKLDPPDLSSTGSDRIAT. An intrachain disulfide couples Cys559 to Cys598.

Belongs to the glycosyl hydrolase 47 family. It depends on Ca(2+) as a cofactor.

It localises to the endoplasmic reticulum membrane. The protein operates within protein modification; protein glycosylation. Its function is as follows. Putative mannosidase involved in glycoprotein quality control since it is involved in the targeting of misfolded glycoproteins for ER-associated protein degradation (ERAD). In Saccharomyces cerevisiae (strain ATCC 204508 / S288c) (Baker's yeast), this protein is Putative endoplasmic reticulum mannosidase MNL2 (MNL2).